The primary structure comprises 236 residues: Demethylmenaquinone methyltransferase (236 aa).

S-adenosyl-L-methionine is bound by residues T62, D80, 107–108 (DA), and S124.

It belongs to the class I-like SAM-binding methyltransferase superfamily. MenG/UbiE family.

The enzyme catalyses a 2-demethylmenaquinol + S-adenosyl-L-methionine = a menaquinol + S-adenosyl-L-homocysteine + H(+). Its pathway is quinol/quinone metabolism; menaquinone biosynthesis; menaquinol from 1,4-dihydroxy-2-naphthoate: step 2/2. Methyltransferase required for the conversion of demethylmenaquinol (DMKH2) to menaquinol (MKH2). The sequence is that of Demethylmenaquinone methyltransferase from Thermobifida fusca (strain YX).